Reading from the N-terminus, the 116-residue chain is Large ribosomal subunit protein bL19 (116 aa).

Belongs to the bacterial ribosomal protein bL19 family.

Functionally, this protein is located at the 30S-50S ribosomal subunit interface and may play a role in the structure and function of the aminoacyl-tRNA binding site. The protein is Large ribosomal subunit protein bL19 of Pseudomonas putida (strain W619).